The following is a 269-amino-acid chain: Subtilisin Savinase (269 aa).

Glutamine 2 contacts Ca(2+). The Peptidase S8 domain maps to 5 to 268 (PWGISRVQAP…SGLVNAEAAT (264 aa)). Aspartate 32 functions as the Charge relay system in the catalytic mechanism. Residue aspartate 40 participates in Ca(2+) binding. Histidine 62 functions as the Charge relay system in the catalytic mechanism. Leucine 73, asparagine 75, isoleucine 77, valine 79, alanine 163, tyrosine 165, and alanine 168 together coordinate Ca(2+). Serine 215 functions as the Charge relay system in the catalytic mechanism.

Belongs to the peptidase S8 family. Ca(2+) is required as a cofactor.

The protein localises to the secreted. It carries out the reaction Hydrolysis of proteins with broad specificity for peptide bonds, and a preference for a large uncharged residue in P1. Hydrolyzes peptide amides.. Functionally, subtilisin is an extracellular alkaline serine protease, it catalyzes the hydrolysis of proteins and peptide amides. This is Subtilisin Savinase from Lederbergia lenta (Bacillus lentus).